We begin with the raw amino-acid sequence, 154 residues long: ATP synthase subunit b (154 aa).

The helical transmembrane segment at 5–27 threads the bilayer; it reads LLGQAIAFTLFVWFCMKYVWPPI.

It belongs to the ATPase B chain family. F-type ATPases have 2 components, F(1) - the catalytic core - and F(0) - the membrane proton channel. F(1) has five subunits: alpha(3), beta(3), gamma(1), delta(1), epsilon(1). F(0) has three main subunits: a(1), b(2) and c(10-14). The alpha and beta chains form an alternating ring which encloses part of the gamma chain. F(1) is attached to F(0) by a central stalk formed by the gamma and epsilon chains, while a peripheral stalk is formed by the delta and b chains.

It is found in the cell inner membrane. Functionally, f(1)F(0) ATP synthase produces ATP from ADP in the presence of a proton or sodium gradient. F-type ATPases consist of two structural domains, F(1) containing the extramembraneous catalytic core and F(0) containing the membrane proton channel, linked together by a central stalk and a peripheral stalk. During catalysis, ATP synthesis in the catalytic domain of F(1) is coupled via a rotary mechanism of the central stalk subunits to proton translocation. Component of the F(0) channel, it forms part of the peripheral stalk, linking F(1) to F(0). The chain is ATP synthase subunit b from Aliivibrio fischeri (strain ATCC 700601 / ES114) (Vibrio fischeri).